We begin with the raw amino-acid sequence, 156 residues long: Acyl carrier protein, mitochondrial (156 aa).

The transit peptide at 1 to 68 (MASRVLSAYV…GRVTQLCRQY (68 aa)) directs the protein to the mitochondrion. Positions 77–152 (EGIQDRVLYV…EIVDYIADKK (76 aa)) constitute a Carrier domain. Lysine 88 is subject to N6-acetyllysine. The residue at position 112 (serine 112) is an O-(pantetheine 4'-phosphoryl)serine.

Belongs to the acyl carrier protein (ACP) family. In terms of assembly, mammalian complex I is composed of 45 different subunits. Interacts with ETFRF1. Identified in a complex composed of MALSU1, MIEF1 upstream open reading frame protein and NDUFAB1; within the trimeric complex, MIEF1 upstream open reading frame protein functions as a bridging scaffold that interacts with MALSU1 on one side, and with NDUFAB1 on the other side. The complex interacts with the mitochondrial large ribosomal subunit. Interacts with alpha-1-microglobulin chain; this interaction is required for the maintenance of mitochondrial redox homeostasis. Component of the mitochondrial core iron-sulfur cluster (ISC) complex composed of NFS1, LYRM4, NDUFAB1, ISCU, FXN, and FDX2; this complex is a heterohexamer containing two copies of each monomer. Component of the cyteine desulfurase complex composed of NFS1, LYRM4 and NDUFAB1; this complex contributes to the stability and cysteine desulfurase activity of NFS1. Post-translationally, phosphopantetheinylation at Ser-112 is essential for interactions with LYR motif-containing proteins.

The protein localises to the mitochondrion. Its function is as follows. Carrier of the growing fatty acid chain in fatty acid biosynthesis. Accessory and non-catalytic subunit of the mitochondrial membrane respiratory chain NADH dehydrogenase (Complex I), which functions in the transfer of electrons from NADH to the respiratory chain. Accessory protein, of the core iron-sulfur cluster (ISC) assembly complex, that regulates, in association with LYRM4, the stability and the cysteine desulfurase activity of NFS1 and participates in the [2Fe-2S] clusters assembly on the scaffolding protein ISCU. The core iron-sulfur cluster (ISC) assembly complex is involved in the de novo synthesis of a [2Fe-2S] cluster, the first step of the mitochondrial iron-sulfur protein biogenesis. This process is initiated by the cysteine desulfurase complex (NFS1:LYRM4:NDUFAB1) that produces persulfide which is delivered on the scaffold protein ISCU in a FXN-dependent manner. Then this complex is stabilized by FDX2 which provides reducing equivalents to accomplish the [2Fe-2S] cluster assembly. Finally, the [2Fe-2S] cluster is transferred from ISCU to chaperone proteins, including HSCB, HSPA9 and GLRX5. This is Acyl carrier protein, mitochondrial from Gorilla gorilla gorilla (Western lowland gorilla).